Here is a 181-residue protein sequence, read N- to C-terminus: Proteinase inhibitor B (181 aa).

Residues 1–24 (MAASNALLLISGALLISLAVLCQG) form the signal peptide. 3 disulfide bridges follow: Cys-67/Cys-113, Cys-134/Cys-143, and Cys-136/Cys-139.

This sequence belongs to the protease inhibitor I3 (leguminous Kunitz-type inhibitor) family.

The protein resides in the secreted. In terms of biological role, possesses two reactive sites. Inhibits two molecules of trypsin simultaneously. Inhibits efficiently kallikrein, but chymotrypsin weakly. The chain is Proteinase inhibitor B from Sagittaria sagittifolia (Arrowhead).